The following is a 453-amino-acid chain: Tubulin alpha chain (453 aa).

Q11 contributes to the GTP binding site. An N6-acetyllysine modification is found at K40. GTP contacts are provided by E71, G144, T145, T179, N206, and N228. Residue E71 coordinates Mg(2+). E254 is a catalytic residue.

The protein belongs to the tubulin family. As to quaternary structure, dimer of alpha and beta chains. A typical microtubule is a hollow water-filled tube with an outer diameter of 25 nm and an inner diameter of 15 nM. Alpha-beta heterodimers associate head-to-tail to form protofilaments running lengthwise along the microtubule wall with the beta-tubulin subunit facing the microtubule plus end conferring a structural polarity. Microtubules usually have 13 protofilaments but different protofilament numbers can be found in some organisms and specialized cells. The cofactor is Mg(2+). Post-translationally, undergoes a tyrosination/detyrosination cycle, the cyclic removal and re-addition of a C-terminal tyrosine residue by the enzymes tubulin tyrosine carboxypeptidase (TTCP) and tubulin tyrosine ligase (TTL), respectively. Acetylation of alpha chains at Lys-40 stabilizes microtubules and affects affinity and processivity of microtubule motors. This modification has a role in multiple cellular functions, ranging from cell motility, cell cycle progression or cell differentiation to intracellular trafficking and signaling.

The protein localises to the cytoplasm. It is found in the cytoskeleton. It carries out the reaction GTP + H2O = GDP + phosphate + H(+). Its function is as follows. Tubulin is the major constituent of microtubules, a cylinder consisting of laterally associated linear protofilaments composed of alpha- and beta-tubulin heterodimers. Microtubules grow by the addition of GTP-tubulin dimers to the microtubule end, where a stabilizing cap forms. Below the cap, tubulin dimers are in GDP-bound state, owing to GTPase activity of alpha-tubulin. In Plasmodium falciparum (isolate K1 / Thailand), this protein is Tubulin alpha chain.